We begin with the raw amino-acid sequence, 549 residues long: Membrane protein insertase YidC (549 aa).

The chain crosses the membrane as a helical span at residues 6–26; sequence NLLLIGLLLVSFMLWQSWMVD. Residues 35–55 form a disordered region; that stretch reads ATAESSVPASSGGDVPNQNDA. A run of 4 helical transmembrane segments spans residues 349–369, 424–444, 462–482, and 503–523; these read QFLHGLVGNWGVAIILITMIV, LGGCFPLLIQMPIFIALYWTL, LSVKDPYYVLPLLMGATMWYI, and PIVFTFMFLWFPSGLTLYWVV.

It belongs to the OXA1/ALB3/YidC family. Type 1 subfamily. Interacts with the Sec translocase complex via SecD. Specifically interacts with transmembrane segments of nascent integral membrane proteins during membrane integration.

It localises to the cell inner membrane. In terms of biological role, required for the insertion and/or proper folding and/or complex formation of integral membrane proteins into the membrane. Involved in integration of membrane proteins that insert both dependently and independently of the Sec translocase complex, as well as at least some lipoproteins. Aids folding of multispanning membrane proteins. This is Membrane protein insertase YidC from Tolumonas auensis (strain DSM 9187 / NBRC 110442 / TA 4).